A 194-amino-acid polypeptide reads, in one-letter code: Putative 3-methyladenine DNA glycosylase (194 aa).

The protein belongs to the DNA glycosylase MPG family.

In Myxococcus xanthus (strain DK1622), this protein is Putative 3-methyladenine DNA glycosylase.